The chain runs to 614 residues: 4-hydroxy-3-methylbut-2-en-1-yl diphosphate synthase (flavodoxin) (614 aa).

[4Fe-4S] cluster contacts are provided by Cys-522, Cys-525, Cys-556, and Glu-563.

This sequence belongs to the IspG family. The cofactor is [4Fe-4S] cluster.

It catalyses the reaction (2E)-4-hydroxy-3-methylbut-2-enyl diphosphate + oxidized [flavodoxin] + H2O + 2 H(+) = 2-C-methyl-D-erythritol 2,4-cyclic diphosphate + reduced [flavodoxin]. The protein operates within isoprenoid biosynthesis; isopentenyl diphosphate biosynthesis via DXP pathway; isopentenyl diphosphate from 1-deoxy-D-xylulose 5-phosphate: step 5/6. Its function is as follows. Converts 2C-methyl-D-erythritol 2,4-cyclodiphosphate (ME-2,4cPP) into 1-hydroxy-2-methyl-2-(E)-butenyl 4-diphosphate. This Phocaeicola vulgatus (strain ATCC 8482 / DSM 1447 / JCM 5826 / CCUG 4940 / NBRC 14291 / NCTC 11154) (Bacteroides vulgatus) protein is 4-hydroxy-3-methylbut-2-en-1-yl diphosphate synthase (flavodoxin).